The following is a 269-amino-acid chain: Small ribosomal subunit protein uS2 (269 aa).

The tract at residues 228–269 (ARAERQAAAAKDAAGDTGKSEADAEAVKAEAAAEEKAETTEA) is disordered. Over residues 233–244 (QAAAAKDAAGDT) the composition is skewed to low complexity. The span at 245 to 269 (GKSEADAEAVKAEAAAEEKAETTEA) shows a compositional bias: basic and acidic residues.

It belongs to the universal ribosomal protein uS2 family.

This chain is Small ribosomal subunit protein uS2, found in Corynebacterium urealyticum (strain ATCC 43042 / DSM 7109).